The sequence spans 884 residues: DNA mismatch repair protein MutS (884 aa).

601 to 608 (GPNMSGKS) serves as a coordination point for ATP. Residues 826-845 (ESQLSFFGGEQSSKKQDKPL) are disordered.

Belongs to the DNA mismatch repair MutS family.

In terms of biological role, this protein is involved in the repair of mismatches in DNA. It is possible that it carries out the mismatch recognition step. This protein has a weak ATPase activity. The protein is DNA mismatch repair protein MutS of Bacillus cereus (strain ATCC 14579 / DSM 31 / CCUG 7414 / JCM 2152 / NBRC 15305 / NCIMB 9373 / NCTC 2599 / NRRL B-3711).